A 93-amino-acid polypeptide reads, in one-letter code: Acylphosphatase (93 aa).

Positions 5–93 (TAILRVTGFV…EERKTFDIVY (89 aa)) constitute an Acylphosphatase-like domain. Residues Arg20 and Asn38 contribute to the active site.

This sequence belongs to the acylphosphatase family.

The catalysed reaction is an acyl phosphate + H2O = a carboxylate + phosphate + H(+). This is Acylphosphatase (acyP) from Listeria monocytogenes serotype 4b (strain F2365).